The chain runs to 179 residues: dCTP deaminase (179 aa).

DCTP contacts are provided by residues 101–106 (RSTLAR) and Asp-117. Catalysis depends on Glu-127, which acts as the Proton donor/acceptor. Gln-165 is a binding site for dCTP.

The protein belongs to the dCTP deaminase family. Homotrimer.

The enzyme catalyses dCTP + H2O + H(+) = dUTP + NH4(+). It participates in pyrimidine metabolism; dUMP biosynthesis; dUMP from dCTP (dUTP route): step 1/2. Catalyzes the deamination of dCTP to dUTP. The chain is dCTP deaminase from Caldivirga maquilingensis (strain ATCC 700844 / DSM 13496 / JCM 10307 / IC-167).